Here is a 367-residue protein sequence, read N- to C-terminus: Apolipoprotein A-V (367 aa).

The N-terminal stretch at 1 to 20 (MVAVLTWALALLSAFATVQT) is a signal peptide. Serine 56 bears the Phosphoserine mark. Residues 71 to 90 (LGPLSGQGREPPGLPHDPEG) are disordered.

It belongs to the apolipoprotein A1/A4/E family. In terms of assembly, interacts with GPIHBP1. Interacts with SORL1; this interaction leads to APOA5 internalization and sorting either to lysosomes and degradation, or to the trans-Golgi network. Phosphorylated by FAM20C in the extracellular medium.

It localises to the secreted. Its subcellular location is the early endosome. The protein localises to the late endosome. It is found in the golgi apparatus. The protein resides in the trans-Golgi network. Functionally, minor apolipoprotein mainly associated with HDL and to a lesser extent with VLDL. May also be associated with chylomicrons. Important determinant of plasma triglyceride (TG) levels by both being a potent stimulator of apo-CII lipoprotein lipase (LPL) TG hydrolysis and an inhibitor of the hepatic VLDL-TG production rate (without affecting the VLDL-apoB production rate). Activates poorly lecithin:cholesterol acyltransferase (LCAT) and does not enhance efflux of cholesterol from macrophages. Binds heparin. This is Apolipoprotein A-V (APOA5) from Neomonachus schauinslandi (Hawaiian monk seal).